The chain runs to 398 residues: Ubiquitin-like modifier-activating enzyme 5 (398 aa).

The ATP site is built by Gly-79, Asp-100, Lys-123, Asn-146, and Asn-180. Residues Cys-222 and Cys-225 each contribute to the Zn(2+) site. Cys-246 serves as the catalytic Glycyl thioester intermediate. Zn(2+)-binding residues include Cys-299 and Cys-304. A UFM1-interacting sequence (UIS) motif is present at residues 330-342; that stretch reads VVHEDNEWGIELV. The linker stretch occupies residues 343 to 373; that stretch reads SEVTEAELQDASGPIPDLPEGITVAYTIPEK. The short motif at 383-398 is the UFC1-binding sequence (UFC) element; that stretch reads ETEQSLEELMAQMKKI.

Belongs to the ubiquitin-activating E1 family. UBA5 subfamily. In terms of assembly, homodimer; homodimerization is required for ufm1 activation. Interacts (via UIS motif) with ufm1; binds ufm1 via a trans-binding mechanism in which ufm1 interacts with distinct sites in both subunits of the uba5 homodimer. Interacts (via C-terminus) with ufc1.

The protein localises to the cytoplasm. It is found in the nucleus. Its subcellular location is the endoplasmic reticulum membrane. It localises to the golgi apparatus. In terms of biological role, E1-like enzyme which specifically catalyzes the first step in ufmylation. Activates ufm1 by first adenylating its C-terminal glycine residue with ATP, and thereafter linking this residue to the side chain of a cysteine residue in E1, yielding a ufm1-E1 thioester and free AMP. Activates ufm1 via a trans-binding mechanism, in which ufm1 interacts with distinct sites in both subunits of the uba5 homodimer. Trans-binding also promotes stabilization of the uba5 homodimer, and enhances ATP-binding. Transfer of ufm1 from uba5 to the E2-like enzyme UFC1 also takes place using a trans mechanism. Ufmylation plays a key role in various processes, such as ribosome recycling, response to DNA damage, interferon response or reticulophagy (also called ER-phagy). The protein is Ubiquitin-like modifier-activating enzyme 5 of Danio rerio (Zebrafish).